A 422-amino-acid chain; its full sequence is UPF0597 protein Kole_0595 (422 aa).

This sequence belongs to the UPF0597 family.

In Kosmotoga olearia (strain ATCC BAA-1733 / DSM 21960 / TBF 19.5.1), this protein is UPF0597 protein Kole_0595.